The sequence spans 257 residues: Low affinity immunoglobulin gamma Fc region receptor III-A (257 aa).

Positions 1 to 19 (MWQLLSPTALLLLVSVPGT) are cleaved as a signal peptide. Over 20-209 (HAEDPPKSVV…ILSFFLPWHQ (190 aa)) the chain is Extracellular. Ig-like C2-type domains lie at 25-104 (PKSV…LRLE) and 108-190 (GWLL…VKVT). Intrachain disulfides connect cysteine 48-cysteine 90 and cysteine 129-cysteine 173. Asparagine 64, asparagine 134, and asparagine 162 each carry an N-linked (GlcNAc...) asparagine glycan. A glycan (N-linked (GlcNAc...) asparagine; in variant N-181) is linked at aspartate 181. The chain crosses the membrane as a helical span at residues 210–230 (IIFCLVMGFLFAVDTGLYFSV). Over 231–257 (RKVLRSSKEDWRNGKVTWSRDPADKGG) the chain is Cytoplasmic.

In terms of assembly, forms a heterooligomeric complex with ITAM-containing signaling subunits FCER1G. Interacts (via transmembrane domain) with signaling subunits; this interaction is a prerequisite for receptor complex expression on the cell surface and intracellular signal transduction. Binds the Fc region of antigen-complexed IgG. Expressed in polymorphonuclear leukocytes, pulmonary alveolar macrophages and peripheral blood mononuclear cells (at protein level). Found in spleen, and at very low levels in lymph nodes but not in thymus or liver.

The protein resides in the cell membrane. Receptor for the invariable Fc fragment of immunoglobulin gamma (IgG). Optimally activated upon binding of clustered antigen-IgG complexes displayed on cell surfaces, triggers lysis of antibody-coated cells, a process known as antibody-dependent cellular cytotoxicity (ADCC). Does not bind free monomeric IgG, thus avoiding inappropriate effector cell activation in the absence of antigenic trigger. Mediates IgG effector functions on natural killer (NK) cells. Binds antigen-IgG complexes generated upon infection and triggers NK cell-dependent cytokine production and degranulation to limit viral load and propagation. Fc-binding subunit that associates with FCER1G adapter to form functional signaling complexes. Following the engagement of antigen-IgG complexes, triggers phosphorylation of immunoreceptor tyrosine-based activation motif (ITAM)-containing adapter with subsequent activation of phosphatidylinositol 3-kinase signaling and sustained elevation of intracellular calcium that ultimately drive NK cell activation. Mediates enhanced ADCC in response to afucosylated IgGs. This Sus scrofa (Pig) protein is Low affinity immunoglobulin gamma Fc region receptor III-A.